We begin with the raw amino-acid sequence, 416 residues long: Thioredoxin domain-containing protein 5 homolog (416 aa).

The signal sequence occupies residues 1–25 (MLTRSILSVAVCGLLLSPLLPITRA). 3 Thioredoxin domains span residues 26–145 (SQEE…KELS), 150–272 (ADLG…KMVG), and 293–412 (AGEE…KFLG). Intrachain disulfides connect C65/C68, C194/C197, and C331/C334. The short motif at 413–416 (HDEL) is the Prevents secretion from ER element.

The protein belongs to the protein disulfide isomerase family.

It localises to the endoplasmic reticulum. The protein resides in the cell surface. Functionally, possesses thioredoxin activity. Acts as a ligand for Drpr and is required for the phagocytosis of apoptotic cells. Binds to the extracellular region of Drpr and augments Drpr tyrosine phosphorylation. This is Thioredoxin domain-containing protein 5 homolog from Drosophila melanogaster (Fruit fly).